Consider the following 230-residue polypeptide: Orotidine 5'-phosphate decarboxylase (230 aa).

Substrate-binding positions include D10, K31, 58 to 67 (DLKLHDIPNT), T117, R179, Q188, G208, and R209. K60 functions as the Proton donor in the catalytic mechanism.

Belongs to the OMP decarboxylase family. Type 1 subfamily. As to quaternary structure, homodimer.

The enzyme catalyses orotidine 5'-phosphate + H(+) = UMP + CO2. Its pathway is pyrimidine metabolism; UMP biosynthesis via de novo pathway; UMP from orotate: step 2/2. Catalyzes the decarboxylation of orotidine 5'-monophosphate (OMP) to uridine 5'-monophosphate (UMP). The chain is Orotidine 5'-phosphate decarboxylase from Staphylococcus epidermidis (strain ATCC 12228 / FDA PCI 1200).